The following is a 538-amino-acid chain: MVKQLKFSEDARQAMLRGVDQLANAVKVTIGPKGRNVVLDKEFTAPLITNDGVTIAKEIELEDPYENMGAKLVQEVANKTNEIAGDGTTTATVLAQAMIQEGLKNVTSGANPVGLRQGIDKAVKVAVEALHENSQKVENKNEIAQVGAISAADEEIGRYISEAMEKVGNDGVITIEESNGLNTELEVVEGMQFDRGYQSPYMVTDSDKMVAELERPYILVTDKKISSFQDILPLLEQVVQSNRPILIVADEVEGDALTNIVLNRMRGTFTAVAVKAPGFGDRRKAMLEDLAILTGAQVITDDLGLDLKDASIDMLGTASKVEVTKDNTTVVDGDGDENSIDARVSQLKSQIEETESDFDREKLQERLAKLAGGVAVIKVGAASETELKERKLRIEDALNSTRAAVEEGIVAGGGTALVNVYQKVSEIEAEGDIETGVNIVLKALTAPVRQIAENAGLEGSVIVERLKNAEPGVGFNAATNEWVNMLEEGIVDPTKVTRSALQHAASVAAMFLTTEAVVASIPEKNNDQPNMGGMPGMM.

ATP contacts are provided by residues Thr-29–Pro-32, Asp-86–Thr-90, Gly-413, Asn-476–Ala-478, and Asp-492.

This sequence belongs to the chaperonin (HSP60) family. In terms of assembly, forms a cylinder of 14 subunits composed of two heptameric rings stacked back-to-back. Interacts with the co-chaperonin GroES.

Its subcellular location is the cytoplasm. It carries out the reaction ATP + H2O + a folded polypeptide = ADP + phosphate + an unfolded polypeptide.. In terms of biological role, together with its co-chaperonin GroES, plays an essential role in assisting protein folding. The GroEL-GroES system forms a nano-cage that allows encapsulation of the non-native substrate proteins and provides a physical environment optimized to promote and accelerate protein folding. The protein is Chaperonin GroEL of Staphylococcus aureus (strain USA300).